Here is a 131-residue protein sequence, read N- to C-terminus: Small ribosomal subunit protein eS24 (131 aa).

Met1 carries the N-acetylmethionine modification. Phosphothreonine is present on Thr9. Lys37 is covalently cross-linked (Glycyl lysine isopeptide (Lys-Gly) (interchain with G-Cter in SUMO2)). Positions 90–100 (RLARHGLYEKK) are enriched in basic and acidic residues. The interval 90 to 131 (RLARHGLYEKKKTSRKQRKERKNRMKKVRGTAKANVGAGKKK) is disordered. The span at 101–119 (KTSRKQRKERKNRMKKVRG) shows a compositional bias: basic residues.

Belongs to the eukaryotic ribosomal protein eS24 family. In terms of assembly, component of the small ribosomal subunit. Part of the small subunit (SSU) processome, composed of more than 70 proteins and the RNA chaperone small nucleolar RNA (snoRNA) U3.

Its subcellular location is the cytoplasm. It localises to the nucleus. It is found in the nucleolus. In terms of biological role, component of the small ribosomal subunit. The ribosome is a large ribonucleoprotein complex responsible for the synthesis of proteins in the cell. Required for processing of pre-rRNA and maturation of 40S ribosomal subunits. Part of the small subunit (SSU) processome, first precursor of the small eukaryotic ribosomal subunit. During the assembly of the SSU processome in the nucleolus, many ribosome biogenesis factors, an RNA chaperone and ribosomal proteins associate with the nascent pre-rRNA and work in concert to generate RNA folding, modifications, rearrangements and cleavage as well as targeted degradation of pre-ribosomal RNA by the RNA exosome. The sequence is that of Small ribosomal subunit protein eS24 (RPS24) from Pongo abelii (Sumatran orangutan).